The chain runs to 537 residues: 5,6-dihydroxyindole-2-carboxylic acid oxidase (537 aa).

The signal sequence occupies residues 1–24; sequence MKSYNVLPLAYISLFLMLFYQVWA. At 25 to 477 the chain is on the lumenal, melanosome side; it reads QFPRECANIE…WPGQEFTVSE (453 aa). Intrachain disulfides connect C30–C41, C42–C65, C56–C99, C101–C110, and C113–C122. N-linked (GlcNAc...) asparagine glycosylation is found at N96 and N104. N181 carries an N-linked (GlcNAc...) asparagine glycan. H192, H215, and H224 together coordinate Zn(2+). Cystine bridges form between C258-C261 and C290-C303. N304 and N350 each carry an N-linked (GlcNAc...) asparagine glycan. Residues H377 and H381 each contribute to the Zn(2+) site. N385 carries N-linked (GlcNAc...) asparagine glycosylation. H404 serves as a coordination point for Zn(2+). The helical transmembrane segment at 478 to 501 threads the bilayer; sequence IITIAVVAALLLVAAIFGVASCLI. Residues 502–537 are Cytoplasmic-facing; it reads RSRSTKNEANQPLLTDHYQRYAEDYEELPNPNHSMV.

This sequence belongs to the tyrosinase family. In terms of assembly, monomer. Interacts with ATP7A. Interacts with SLC45A2. It depends on Cu(2+) as a cofactor. Requires Zn(2+) as cofactor. Post-translationally, glycosylated. In terms of tissue distribution, pigment cells.

Its subcellular location is the melanosome membrane. It carries out the reaction 2 5,6-dihydroxyindole-2-carboxylate + O2 = 2 indole-5,6-quinone-2-carboxylate + 2 H2O. Its pathway is pigment biosynthesis; melanin biosynthesis. Functionally, plays a role in melanin biosynthesis. Catalyzes the oxidation of 5,6-dihydroxyindole-2-carboxylic acid (DHICA) into indole-5,6-quinone-2-carboxylic acid. May regulate or influence the type of melanin synthesized. Also to a lower extent, capable of hydroxylating tyrosine and producing melanin. This chain is 5,6-dihydroxyindole-2-carboxylic acid oxidase (Tyrp1), found in Mus musculus (Mouse).